The sequence spans 560 residues: NAD-dependent malic enzyme (560 aa).

Residue tyrosine 100 is the Proton donor of the active site. Arginine 153 lines the NAD(+) pocket. The active-site Proton acceptor is lysine 171. The a divalent metal cation site is built by glutamate 242, aspartate 243, and aspartate 266. The NAD(+) site is built by aspartate 266 and asparagine 413.

The protein belongs to the malic enzymes family. Homotetramer. Requires Mg(2+) as cofactor. Mn(2+) serves as cofactor.

It catalyses the reaction (S)-malate + NAD(+) = pyruvate + CO2 + NADH. The enzyme catalyses oxaloacetate + H(+) = pyruvate + CO2. The polypeptide is NAD-dependent malic enzyme (Psychromonas ingrahamii (strain DSM 17664 / CCUG 51855 / 37)).